Consider the following 412-residue polypeptide: Gamma-glutamyl phosphate reductase (412 aa).

Belongs to the gamma-glutamyl phosphate reductase family.

Its subcellular location is the cytoplasm. It catalyses the reaction L-glutamate 5-semialdehyde + phosphate + NADP(+) = L-glutamyl 5-phosphate + NADPH + H(+). The protein operates within amino-acid biosynthesis; L-proline biosynthesis; L-glutamate 5-semialdehyde from L-glutamate: step 2/2. Catalyzes the NADPH-dependent reduction of L-glutamate 5-phosphate into L-glutamate 5-semialdehyde and phosphate. The product spontaneously undergoes cyclization to form 1-pyrroline-5-carboxylate. This is Gamma-glutamyl phosphate reductase from Nitratiruptor sp. (strain SB155-2).